The sequence spans 463 residues: MSRGYSLHLVLFLVLSTAFPSQARLSRYRRSAADAVSTDIDGIIGQLNDLGTDTKRLKEALQGVQEAVKKEPATTIAKVSTIVGSVGGSLSKFKSGDPFDVASGCLDIIASVATTFGGPYGIAIGAVASLISSILSLFSGNSMGSAIKQVIDDAFKKYRDQELEDNVKGAKRTFNAVITFVNSVSKTENLTEVHLDSVRDAVRVDAFTNMLGVLESRINRGSVSTDNNEAMRTINFIFLYLQLSVMRETLLTQVILLYKRAGGAYDELALSLSLTSDQNKEATRETVTFLHQMETKYSLCGSYYYPIDHSKAAIGILKLTKFFGVPDPARYTFDGLYYRMQNRAWNRYSICKESYAGNHMFRGCKDSSYHGIRIKKLENGYHTITLRSKAMYVTKHAQGWGWGTADEDPGEQGYFTFIPLTNGFYMVSTKKWPDYFVYMESSAHGYIRSWHYNPDPQGQWKIL.

Positions 1-18 are cleaved as a signal peptide; that stretch reads MSRGYSLHLVLFLVLSTA.

This sequence belongs to the jellyfish toxin family. Type II subfamily. Oligomer. In terms of processing, contains disulfide bonds. As to expression, it is suggested that CaTX-B is synthesized in the tentacle, is modified (become CaTX-A) and then migrates to the nematocyst.

The protein localises to the secreted. It localises to the nematocyst. Its subcellular location is the target cell membrane. Functionally, has potent hemolytic activity. Is lethal to crayfish. Causes cutaneous inflammation in humans. May act as a pore-forming toxin, disrupting normal transmembrane ion concentration gradients in susceptible cells. The chain is Toxin CaTX-A from Carybdea alata (Hawaiian box jellyfish).